Reading from the N-terminus, the 467-residue chain is Chromosomal replication initiator protein DnaA (467 aa).

Residues 1 to 85 (MTTTLWPQVL…LEVGEYAIES (85 aa)) are domain I, interacts with DnaA modulators. Positions 85–130 (SFNEPENTSVPQPLRETKAEREAAEKAASSTSKKKSDSPPKKTIKH) are domain II. The tract at residues 87–129 (NEPENTSVPQPLRETKAEREAAEKAASSTSKKKSDSPPKKTIK) is disordered. The segment covering 99-109 (RETKAEREAAE) has biased composition (basic and acidic residues). The segment at 131–347 (NLNTNFTFDT…GALKRVGAFA (217 aa)) is domain III, AAA+ region. 4 residues coordinate ATP: G175, G177, K178, and T179. The domain IV, binds dsDNA stretch occupies residues 348-467 (QFTQQLVTVD…FNSLIRIITN (120 aa)).

The protein belongs to the DnaA family. In terms of assembly, oligomerizes as a right-handed, spiral filament on DNA at oriC.

The protein localises to the cytoplasm. Functionally, plays an essential role in the initiation and regulation of chromosomal replication. ATP-DnaA binds to the origin of replication (oriC) to initiate formation of the DNA replication initiation complex once per cell cycle. Binds the DnaA box (a 9 base pair repeat at the origin) and separates the double-stranded (ds)DNA. Forms a right-handed helical filament on oriC DNA; dsDNA binds to the exterior of the filament while single-stranded (ss)DNA is stabiized in the filament's interior. The ATP-DnaA-oriC complex binds and stabilizes one strand of the AT-rich DNA unwinding element (DUE), permitting loading of DNA polymerase. After initiation quickly degrades to an ADP-DnaA complex that is not apt for DNA replication. Binds acidic phospholipids. This Hydrogenovibrio crunogenus (strain DSM 25203 / XCL-2) (Thiomicrospira crunogena) protein is Chromosomal replication initiator protein DnaA.